A 122-amino-acid chain; its full sequence is Sterile alpha motif domain-containing protein 13 (122 aa).

The region spanning 51–119 (WAVMDVVNYF…KPLQTKHLKN (69 aa)) is the SAM domain.

This chain is Sterile alpha motif domain-containing protein 13 (SAMD13), found in Homo sapiens (Human).